Reading from the N-terminus, the 132-residue chain is Chemokine-like protein TAFA-5 (132 aa).

A signal peptide spans 1-43; it reads MAPSPRTGSRQDATALPSMSSTFWAFMILASLLIAYCSQLAAG. N-linked (GlcNAc...) asparagine glycosylation is present at asparagine 113.

This sequence belongs to the TAFA family. As to expression, expressed in the subcutaneous and perirenal adipose tissue (at protein level). Highly expressed in adipose tissue with moderate expression in the brain and ovary. Isoform 2: Brain-specific.

Its subcellular location is the secreted. Acts as a chemokine-like protein by regulating cell proliferation and migration through activation of G protein-coupled receptors (GPCRs), such as S1PR2 and FPR2. Stimulates chemotactic migration of macrophages mediated by the MAPK3/ERK1 and AKT1 pathway. Blocks TNFSF11/RANKL-induced osteoclast formation from macrophages by inhibiting up-regulation of osteoclast fusogenic and differentiation genes. Stimulation of macrophage migration and inhibition of osteoclast formation is mediated via GPCR FPR2. Acts as an adipokine by negatively regulating vascular smooth muscle cell (VSMC) proliferation and migration in response to platelet-derived growth factor stimulation via GPCR S1PR2 and G protein GNA12/GNA13-transmitted RHOA signaling. Inhibits injury-induced cell proliferation and neointima formation in the femoral arteries. The sequence is that of Chemokine-like protein TAFA-5 from Homo sapiens (Human).